The following is a 511-amino-acid chain: Histidine ammonia-lyase (511 aa).

A cross-link (5-imidazolinone (Ala-Gly)) is located at residues 142 to 144 (ASG). Residue serine 143 is modified to 2,3-didehydroalanine (Ser).

It belongs to the PAL/histidase family. Contains an active site 4-methylidene-imidazol-5-one (MIO), which is formed autocatalytically by cyclization and dehydration of residues Ala-Ser-Gly.

The protein resides in the cytoplasm. The catalysed reaction is L-histidine = trans-urocanate + NH4(+). The protein operates within amino-acid degradation; L-histidine degradation into L-glutamate; N-formimidoyl-L-glutamate from L-histidine: step 1/3. This Brucella anthropi (strain ATCC 49188 / DSM 6882 / CCUG 24695 / JCM 21032 / LMG 3331 / NBRC 15819 / NCTC 12168 / Alc 37) (Ochrobactrum anthropi) protein is Histidine ammonia-lyase.